The chain runs to 458 residues: tRNA modification GTPase MnmE (458 aa).

R26, E88, and R127 together coordinate (6S)-5-formyl-5,6,7,8-tetrahydrofolate. Positions 224 to 378 (GLSTAIIGRP…IEDRINQLFF (155 aa)) constitute a TrmE-type G domain. N234 is a binding site for K(+). GTP-binding positions include 234-239 (NVGKSS), 253-259 (TDIAGTT), and 278-281 (DTAG). S238 provides a ligand contact to Mg(2+). Residues T253, I255, and T258 each contribute to the K(+) site. T259 is a Mg(2+) binding site. Position 458 (K458) interacts with (6S)-5-formyl-5,6,7,8-tetrahydrofolate.

This sequence belongs to the TRAFAC class TrmE-Era-EngA-EngB-Septin-like GTPase superfamily. TrmE GTPase family. In terms of assembly, homodimer. Heterotetramer of two MnmE and two MnmG subunits. K(+) serves as cofactor.

It is found in the cytoplasm. Functionally, exhibits a very high intrinsic GTPase hydrolysis rate. Involved in the addition of a carboxymethylaminomethyl (cmnm) group at the wobble position (U34) of certain tRNAs, forming tRNA-cmnm(5)s(2)U34. In Streptococcus pyogenes serotype M6 (strain ATCC BAA-946 / MGAS10394), this protein is tRNA modification GTPase MnmE.